The chain runs to 297 residues: Bax inhibitor 1 (297 aa).

Residues 1–53 (MSGPPPPYEEQSSHLYGQPASSQDGNAFIPEDFKYSTVVISCEPIIRQRFMHK) lie on the Lumenal side of the membrane. The helical transmembrane segment at 54-74 (VYSLLSCQLLASLSFCYWASV) threads the bilayer. Topologically, residues 75 to 85 (STSLQNFIMSH) are cytoplasmic. A helical membrane pass occupies residues 86–106 (IALFYICMVVSLVSCIWLAVS). The Lumenal portion of the chain corresponds to 107-146 (PRPEDYEASVPEPLLTGSSEEPAQEQRRLPWYVLSSYKQK). Residues 147–167 (LTLLSIFTLSEAYCLSLVTLA) form a helical membrane-spanning segment. The Cytoplasmic segment spans residues 168–171 (YDKD). The helical transmembrane segment at 172–192 (TVLSALLITTIVVVGVSLTAL) threads the bilayer. At 193–208 (SERFENVLNSATSIYY) the chain is on the lumenal side. Residues 209-229 (WLNWGLWIMIGMGLTALLFGW) traverse the membrane as a helical segment. Over 230-239 (NTHSSKFNLL) the chain is Cytoplasmic. A helical transmembrane segment spans residues 240–260 (YGWLGAILFTAYLFIDTQLIF). Residues 261–270 (RKVYPDEEVR) lie on the Lumenal side of the membrane. The helical transmembrane segment at 271–291 (CAMMLYLDIVNLFLSILRILA) threads the bilayer. Residues 292–297 (NSNDDN) lie on the Cytoplasmic side of the membrane.

Belongs to the BI1 family. LFG subfamily.

The protein localises to the endoplasmic reticulum membrane. The protein resides in the vacuole membrane. It localises to the mitochondrion membrane. Its function is as follows. Links the unfolded protein response and programmed cell death and mediates mitochondrial-dependent apoptosis. Induces cell death and disruption of the mitochondrial transmembrane potential via the mitochondrial phosphate carrier MIR1. Dispensible for starvation-induced autophagy. In Saccharomyces cerevisiae (strain ATCC 204508 / S288c) (Baker's yeast), this protein is Bax inhibitor 1 (BXI1).